Consider the following 209-residue polypeptide: Glutathione S-transferase D1 (209 aa).

One can recognise a GST N-terminal domain in the interval 1–81 (MVDFYYLPGS…YLVEKYGKTD (81 aa)). Glutathione-binding positions include Ser10, 51–53 (HTI), and 65–67 (ESR). The GST C-terminal domain maps to 87 to 208 (CPKKRAVINQ…AGCLEFKKYF (122 aa)).

Belongs to the GST superfamily. Delta family. In terms of assembly, homodimer.

It carries out the reaction RX + glutathione = an S-substituted glutathione + a halide anion + H(+). The enzyme catalyses 1,1,1-trichloro-2,2-bis(4-chlorophenyl)ethane = 1,1-dichloro-2,2-bis(4-chlorophenyl)ethylene + chloride + H(+). Conjugation of reduced glutathione to a wide number of exogenous and endogenous hydrophobic electrophiles. Has DDT dehydrochlorinase activity. May be involved in detoxification. The sequence is that of Glutathione S-transferase D1 from Drosophila melanogaster (Fruit fly).